We begin with the raw amino-acid sequence, 323 residues long: Voltage-dependent calcium channel gamma-2 subunit (323 aa).

The chain crosses the membrane as a helical span at residues 10 to 30; sequence MLLTTVGAFAAFSLMTIAVGT. The N-linked (GlcNAc...) asparagine glycan is linked to asparagine 48. Helical transmembrane passes span 104–124, 134–154, and 182–202; these read SSIF…CIAA, IILS…IGII, and FGAL…HMFI. Residues 233 to 261 are disordered; the sequence is YQRRSRSSSRSTEPSHSRDASPVGIKGFN. A Phosphoserine modification is found at serine 253. At tyrosine 271 the chain carries Phosphotyrosine. Threonine 321 is modified (phosphothreonine).

Belongs to the PMP-22/EMP/MP20 family. CACNG subfamily. In terms of assembly, the L-type calcium channel is composed of five subunits: alpha-1, alpha-2/delta, beta and gamma. Interacts with the PDZ domains of DLG4/PSD-95 and DLG1/SAP97. May interact with GOPC. Acts as an auxiliary subunit for AMPA-selective glutamate receptors (AMPARs). Found in a complex with GRIA1, GRIA2, GRIA3, GRIA4, CNIH2, CNIH3, CACNG3, CACNG4, CACNG5, CACNG7 and CACNG8. Interacts with GRIA1 and GRIA2. Interacts with MPP2. Phosphorylation of Thr-321 impairs interaction with DLG1 and DLG4. Brain.

The protein resides in the membrane. Its subcellular location is the synapse. It localises to the synaptosome. In terms of biological role, regulates the trafficking and gating properties of AMPA-selective glutamate receptors (AMPARs). Promotes their targeting to the cell membrane and synapses and modulates their gating properties by slowing their rates of activation, deactivation and desensitization. Does not show subunit-specific AMPA receptor regulation and regulates all AMPAR subunits. Thought to stabilize the calcium channel in an inactivated (closed) state. This Homo sapiens (Human) protein is Voltage-dependent calcium channel gamma-2 subunit (CACNG2).